Consider the following 425-residue polypeptide: MLDQRLVRENPDAIATELGRRGKAVDLTRLQVIAQQQRKLEEERSGLQAEGNRIGKEVGQKIKGGADPKGEEVAELRQQGNAIKQKVAVLEEEEKHLFTQLKEQLLTYPNLPSPDCPEGKDETDNVELRRWGSPRQEEGLEEHWQIAERLHLFDTERSVRIAQSRFVTLMGQGARLERALINFMLDLHTSKGYREVMPPVLVNSASLTGSGQLPKFADDCFRCSEDDLWLTPTAEVPVTSLHRDEIIPADQLPLRYAAYSPCFRREAGSYGRDTRGLIRLHQFNKVELYWFAHPDHSAEAHAQITADAEAVLQALELPYRVLDLCTADIGFSAQRTYDLEVWLPGAEAYREISSCSVCGDFQARRSAIRTKEGKSTKLVHTLNGSGLAVGRTMAAVLETGQQSDGSVLLPKALVPYVGDERLQPE.

An L-serine-binding site is contributed by 233 to 235 (TAE). Residue 264–266 (RRE) participates in ATP binding. Glu-287 serves as a coordination point for L-serine. 351–354 (EISS) lines the ATP pocket. Ser-385 provides a ligand contact to L-serine.

Belongs to the class-II aminoacyl-tRNA synthetase family. Type-1 seryl-tRNA synthetase subfamily. As to quaternary structure, homodimer. The tRNA molecule binds across the dimer.

Its subcellular location is the cytoplasm. It catalyses the reaction tRNA(Ser) + L-serine + ATP = L-seryl-tRNA(Ser) + AMP + diphosphate + H(+). The enzyme catalyses tRNA(Sec) + L-serine + ATP = L-seryl-tRNA(Sec) + AMP + diphosphate + H(+). The protein operates within aminoacyl-tRNA biosynthesis; selenocysteinyl-tRNA(Sec) biosynthesis; L-seryl-tRNA(Sec) from L-serine and tRNA(Sec): step 1/1. In terms of biological role, catalyzes the attachment of serine to tRNA(Ser). Is also able to aminoacylate tRNA(Sec) with serine, to form the misacylated tRNA L-seryl-tRNA(Sec), which will be further converted into selenocysteinyl-tRNA(Sec). This is Serine--tRNA ligase from Parasynechococcus marenigrum (strain WH8102).